A 95-amino-acid polypeptide reads, in one-letter code: Co-chaperonin GroES (95 aa).

The protein belongs to the GroES chaperonin family. In terms of assembly, heptamer of 7 subunits arranged in a ring. Interacts with the chaperonin GroEL.

The protein localises to the cytoplasm. Its function is as follows. Together with the chaperonin GroEL, plays an essential role in assisting protein folding. The GroEL-GroES system forms a nano-cage that allows encapsulation of the non-native substrate proteins and provides a physical environment optimized to promote and accelerate protein folding. GroES binds to the apical surface of the GroEL ring, thereby capping the opening of the GroEL channel. The protein is Co-chaperonin GroES of Jannaschia sp. (strain CCS1).